Here is a 563-residue protein sequence, read N- to C-terminus: Nicalin (563 aa).

Residues 1–29 (MQDEIIDFFRSPALLFYMTLMLTICVVNG) form the signal peptide. At 30-522 (SQQVGEVVET…NRLVAERVKP (493 aa)) the chain is on the lumenal side. Residue N232 is glycosylated (N-linked (GlcNAc...) asparagine). Residues 523–543 (AVFELVIAAGVFTYLSAFYYI) form a helical membrane-spanning segment. Over 544–563 (ATHSQNTIEGTVAAIRKSIF) the chain is Cytoplasmic.

It belongs to the nicastrin family. As to quaternary structure, may interact with the levamisole-sensitive nicotinic acetylcholine receptor (L-AChR). May interact with nra-4 in the ER. Expressed in body wall, pharyngeal, and vulval muscles, excretory canal cell, head and motor neurons, and vulval epithelium.

It is found in the endoplasmic reticulum membrane. Its function is as follows. Involved in the recognition and selection of protein complexes to exit the endoplasmic reticulum (ER). In muscles, regulates levamisole-sensitive nicotinic acetylcholine receptor (L-AChR) subunit composition, possibly by allowing only specific L-AChR subunit combinations to exit the ER. Specifically, may promote the inclusion of alpha subunits unc-38 and unc-29 into L-AChR. Regulates L-AChR sensitivity to agonists such as nicotine and levamisole at neuro-muscular junctions. In touch neurons, may prevent ER exit of incorrectly folded mec-4-mec-10 ion channel. This is Nicalin from Caenorhabditis elegans.